The primary structure comprises 210 residues: T-cell surface glycoprotein CD8 beta chain (210 aa).

Residues 1-21 (MRPRLWLLLAAQLAVLHGSSV) form the signal peptide. The region spanning 22–132 (LQQTPAYIKV…ELTFGKGTQL (111 aa)) is the Ig-like V-type domain. Over 22-170 (LQQTPAYIKV…ETQKGPLCSP (149 aa)) the chain is Extracellular. Cysteine 41 and cysteine 116 are oxidised to a cystine. A glycan (N-linked (GlcNAc...) asparagine) is linked at asparagine 102. Residues 171-191 (ITLGLLVAGVLVLLVSLGVAI) traverse the membrane as a helical segment. Topologically, residues 192–210 (HLCCRRRRARLRFMKQFYK) are cytoplasmic.

As to quaternary structure, forms disulfide-linked heterodimers with CD8A at the cell surface. Interacts with CD3D; this interaction couples TCR-CD3 with CD8. Interacts with LCK. Phosphorylated as a consequence of T-cell activation. Post-translationally, palmitoylated at the cytoplasmic tail and thereby targets the heterodimer CD8A/CD8B to lipid rafts unlike CD8A homodimers.

It is found in the cell membrane. Integral membrane glycoprotein that plays an essential role in the immune response and serves multiple functions in responses against both external and internal offenses. In T-cells, functions primarily as a coreceptor for MHC class I molecule:peptide complex. The antigens presented by class I peptides are derived from cytosolic proteins while class II derived from extracellular proteins. Interacts simultaneously with the T-cell receptor (TCR) and the MHC class I proteins presented by antigen presenting cells (APCs). In turn, recruits the Src kinase LCK to the vicinity of the TCR-CD3 complex. A palmitoylation site in the cytoplasmic tail of CD8B chain contributes to partitioning of CD8 into the plasma membrane lipid rafts where signaling proteins are enriched. Once LCK recruited, it initiates different intracellular signaling pathways by phosphorylating various substrates ultimately leading to lymphokine production, motility, adhesion and activation of cytotoxic T-lymphocytes (CTLs). Additionally, plays a critical role in thymic selection of CD8+ T-cells. In Pongo pygmaeus (Bornean orangutan), this protein is T-cell surface glycoprotein CD8 beta chain (CD8B).